The sequence spans 123 residues: Chondroitin proteoglycan 8 (123 aa).

Positions Met1–Ala16 are cleaved as a signal peptide. The disordered stretch occupies residues Ser32–Glu123. Basic and acidic residues predominate over residues Arg38–Thr60. O-linked (Xyl...) (chondroitin sulfate) serine glycosylation is found at Ser63 and Ser65. A compositionally biased stretch (basic and acidic residues) spans Glu74–Glu84. O-linked (Xyl...) (chondroitin sulfate) serine glycans are attached at residues Ser87, Ser93, and Ser114.

This Caenorhabditis briggsae protein is Chondroitin proteoglycan 8 (cpg-8).